Here is a 337-residue protein sequence, read N- to C-terminus: Meiotic driver wtf4 (337 aa).

A compositionally biased stretch (basic and acidic residues) spans 1-29 (MKNKDYPLRSSMDELSTKNDNEIDLEKGP). Residues 1-40 (MKNKDYPLRSSMDELSTKNDNEIDLEKGPLPEYNSEDEST) are disordered. 6 consecutive transmembrane segments (helical) span residues 89–109 (LLIS…CVNP), 119–139 (AFFV…FCFF), 149–169 (CIKV…VGLY), 176–196 (VVII…RSKF), 210–230 (CSIS…FWTL), and 234–254 (FSGL…TKGL).

Belongs to the WTF family. Homomer. Forms protein aggregates. The two isoforms can interact with each other and with themselves. High sequence similarity is required for their interaction.

The protein localises to the spore membrane. The protein resides in the vacuole membrane. Its subcellular location is the ascus epiplasm. It localises to the cytoplasm. It is found in the endoplasmic reticulum membrane. Promotes unequal transmission of alleles from the parental zygote to progeny spores by acting as poison/antidote system where the poison and antidote proteins are produced from the same locus; the poison component is trans-acting and targets all spores within an ascus whereas the antidote component is spore-specific, leading to poisoning of all progeny that do not inherit the allele. Its function is as follows. Localizes isoform 2 to the vacuole thereby facilitating its degradation. Functionally, forms toxic aggregates that disrupt spore maturation. The protein is Meiotic driver wtf4 of Schizosaccharomyces kambucha (Fission yeast).